Consider the following 805-residue polypeptide: ATP-dependent RNA helicase mak-5 (805 aa).

The segment covering 1–10 has biased composition (basic residues); sequence MAVDKKRKNT. Disordered stretches follow at residues 1–33 and 79–189; these read MAVD…KRPV and VPKS…ELET. Residues 85 to 100 show a composition bias toward acidic residues; the sequence is EVEDDGEEFGGFDDEE. Composition is skewed to basic and acidic residues over residues 110–119, 126–143, and 164–189; these read QEVKTSETKA, AKEK…EQQK, and KNAE…ELET. Positions 209–237 match the Q motif motif; it reads SEWVPLDLSPRMISSIAKLRFSKPTVIQS. The Helicase ATP-binding domain occupies 240–463; sequence IPEIMAGHDV…AGKSKFKATS (224 aa). 253 to 260 serves as a coordination point for ATP; that stretch reads ASTGSGKT. The short motif at 372–375 is the DEAD box element; it reads DEAD. A compositionally biased stretch (basic and acidic residues) spans 390–406; it reads FKALDRPPVEENNEDQK. The disordered stretch occupies residues 390 to 435; sequence FKALDRPPVEENNEDQKMGGTDEEGQEEEEEDSEEEEEEEEEHVNK. Over residues 410–431 the composition is skewed to acidic residues; that stretch reads TDEEGQEEEEEDSEEEEEEEEE. A Helicase C-terminal domain is found at 510–666; it reads YLYATLMLQP…NSGNNTKKLV (157 aa). Residues 729–751 are disordered; sequence AGKWGGKGSSKKQKQKEAQQMSK.

Belongs to the DEAD box helicase family. DDX24/MAK5 subfamily.

The protein localises to the nucleus. Its subcellular location is the nucleolus. The enzyme catalyses ATP + H2O = ADP + phosphate + H(+). Functionally, ATP-binding RNA helicase involved in the biogenesis of 60S ribosomal subunits and is required for the normal formation of 25S and 5.8S rRNAs. This is ATP-dependent RNA helicase mak-5 (mak-5) from Neurospora crassa (strain ATCC 24698 / 74-OR23-1A / CBS 708.71 / DSM 1257 / FGSC 987).